Here is a 359-residue protein sequence, read N- to C-terminus: Acyl-CoA desaturase 3 (359 aa).

Residues 1–34 (MPGHLLQEEMTPSYTTTTTITAPPSGSLQNGREK) form a disordered region. Residues 1 to 72 (MPGHLLQEEM…EGPPPKLEYV (72 aa)) are Cytoplasmic-facing. Residues 11-27 (TPSYTTTTTITAPPSGS) are compositionally biased toward low complexity. The helical transmembrane segment at 73-93 (WRNIILMALLHVGALYGITLV) threads the bilayer. Asn75 serves as a coordination point for substrate. Topologically, residues 94-97 (PSCK) are lumenal. A helical membrane pass occupies residues 98-118 (LYTCLFAFVYYVISIEGIGAG). Residues 119 to 217 (VHRLWSHRTY…EKLVMFQRRY (99 aa)) are Cytoplasmic-facing. The Fe cation site is built by His120 and His125. Positions 120–125 (HRLWSH) match the Histidine box-1 motif. Residues Asn148, Arg155, and Asp156 each coordinate substrate. Residues His157, His160, and His161 each coordinate Fe cation. A Histidine box-2 motif is present at residues 157 to 161 (HRAHH). Residues Arg188 and Lys189 each contribute to the substrate site. Phosphoserine is present on Ser203. A helical transmembrane segment spans residues 218–237 (YKPGILLMCFILPTLVPWYC). Residues 238 to 241 (WGET) are Lumenal-facing. A helical transmembrane segment spans residues 242 to 263 (FLNSFYVATLLRYAVVLNATWL). Trp262 contacts substrate. At 264 to 359 (VNSAAHLYGY…RTGDGSHKSG (96 aa)) the chain is on the cytoplasmic side. Positions 269, 298, 301, and 302 each coordinate Fe cation. The Histidine box-3 signature appears at 298 to 302 (HNYHH).

Belongs to the fatty acid desaturase type 1 family. It depends on Fe(2+) as a cofactor. As to expression, detected in skin, but at lower levels compared to Scd1. Detected in the middlle part of the sebaceous gland, but not in hair follicle. Not detected in liver and brain.

The protein resides in the endoplasmic reticulum membrane. It is found in the microsome membrane. It catalyses the reaction hexadecanoyl-CoA + 2 Fe(II)-[cytochrome b5] + O2 + 2 H(+) = (9Z)-hexadecenoyl-CoA + 2 Fe(III)-[cytochrome b5] + 2 H2O. Its function is as follows. Stearoyl-CoA desaturase that utilizes O(2) and electrons from reduced cytochrome b5 to introduce the first double bond into saturated fatty acyl-CoA substrates. Catalyzes the insertion of a cis double bond at the delta-9 position into fatty acyl-CoA substrates including palmitoyl-CoA. Has a strong preference for saturated fatty acids with chain lengths of 14 or 16 carbon atoms (C14:0 and C16:0), and has only very low activity with stearatate (C18:0). Required for the biosynthesis of membrane phospholipids, cholesterol esters and triglycerides. This is Acyl-CoA desaturase 3 from Mus musculus (Mouse).